An 884-amino-acid chain; its full sequence is uncharacterized protein (884 aa).

This is an uncharacterized protein from Mycobacterium bovis (strain ATCC BAA-935 / AF2122/97).